We begin with the raw amino-acid sequence, 432 residues long: Trigger factor (432 aa).

Residues 161-246 form the PPIase FKBP-type domain; that stretch reads EDRVTIDFTG…LKKVEERELP (86 aa).

This sequence belongs to the FKBP-type PPIase family. Tig subfamily. In terms of assembly, homodimer and monomer. In vivo most of the ribosomes are in complex with monomeric TF. Uncomplexed TF, however, is in a monomer-dimer equilibrium with approximately two thirds of TF existing in a dimeric state.

The protein resides in the cytoplasm. The enzyme catalyses [protein]-peptidylproline (omega=180) = [protein]-peptidylproline (omega=0). Functionally, involved in protein export. Acts as a chaperone by maintaining the newly synthesized protein in an open conformation. Functions as a peptidyl-prolyl cis-trans isomerase. This Shigella boydii serotype 18 (strain CDC 3083-94 / BS512) protein is Trigger factor.